Here is a 448-residue protein sequence, read N- to C-terminus: Glucan 1,3-beta-glucosidase I/II (448 aa).

The first 19 residues, 1 to 19, serve as a signal peptide directing secretion; it reads MLSLKTLLCTLLTVSSVLA. Residues 20 to 40 constitute a propeptide that is removed on maturation; the sequence is TPVPARDPSSIQFVHEENKKR. N165 is a glycosylation site (N-linked (GlcNAc...) asparagine). Catalysis depends on E232, which acts as the Proton donor. N325 is a glycosylation site (N-linked (GlcNAc...) asparagine). E334 serves as the catalytic Nucleophile.

This sequence belongs to the glycosyl hydrolase 5 (cellulase A) family.

Its subcellular location is the secreted. The protein resides in the cell wall. It catalyses the reaction Successive hydrolysis of beta-D-glucose units from the non-reducing ends of (1-&gt;3)-beta-D-glucans, releasing alpha-glucose.. Functionally, glucanases possibly play a role in cell expansion during growth, in cell-cell fusion during mating, and in spore release during sporulation. This enzyme hydrolyzes both 1,3-beta- and 1,6-beta-linkages and even has beta-glucosidase activity. It could also function biosynthetically as a transglycosylase. This is Glucan 1,3-beta-glucosidase I/II (EXG1) from Saccharomyces cerevisiae (strain ATCC 204508 / S288c) (Baker's yeast).